Consider the following 157-residue polypeptide: Ribonuclease H (157 aa).

In terms of domain architecture, RNase H type-1 spans 1-146; it reads MPDLFAYTDG…ADELARAGMA (146 aa). Mg(2+) is bound by residues Asp9, Glu52, Asp74, and Asp138.

It belongs to the RNase H family. In terms of assembly, monomer. Mg(2+) is required as a cofactor.

The protein localises to the cytoplasm. It catalyses the reaction Endonucleolytic cleavage to 5'-phosphomonoester.. In terms of biological role, endonuclease that specifically degrades the RNA of RNA-DNA hybrids. In Ruegeria sp. (strain TM1040) (Silicibacter sp.), this protein is Ribonuclease H.